The chain runs to 136 residues: Putative LysR family substrate binding domain-containing protein YagP (136 aa).

This sequence belongs to the LysR transcriptional regulatory family.

This chain is Putative LysR family substrate binding domain-containing protein YagP (yagP), found in Escherichia coli (strain K12).